The following is a 117-amino-acid chain: Structural toxin peptide sea anemone type 9a (117 aa).

The first 23 residues, 1–23, serve as a signal peptide directing secretion; the sequence is MKTIIAIFSLAAMIVLVRPTPLE. Repeat copies occupy residues 28–56, 57–88, and 89–117. The tract at residues 29–117 is 3 X approximate tandem repeats; the sequence is RSIINVPCKK…GKCRKIHGCS (89 aa).

In terms of processing, contains 6 disulfide bonds. In terms of tissue distribution, expressed outside of acontia.

It is found in the secreted. The protein resides in the nematocyst. Functionally, putative neurotoxin. The protein is Structural toxin peptide sea anemone type 9a of Calliactis polypus (Hermit crab anemone).